The following is a 506-amino-acid chain: Glutamate--tRNA ligase (506 aa).

Residues 12–22 carry the 'HIGH' region motif; it reads PSPTGDPHVGT. The 'KMSKS' region signature appears at 253–257; the sequence is KLSKR. Lys-256 lines the ATP pocket.

It belongs to the class-I aminoacyl-tRNA synthetase family. Glutamate--tRNA ligase type 1 subfamily. As to quaternary structure, monomer.

Its subcellular location is the cytoplasm. The enzyme catalyses tRNA(Glu) + L-glutamate + ATP = L-glutamyl-tRNA(Glu) + AMP + diphosphate. Its function is as follows. Catalyzes the attachment of glutamate to tRNA(Glu) in a two-step reaction: glutamate is first activated by ATP to form Glu-AMP and then transferred to the acceptor end of tRNA(Glu). The protein is Glutamate--tRNA ligase of Chlamydia muridarum (strain MoPn / Nigg).